Consider the following 82-residue polypeptide: Capsid protein G8P (82 aa).

The signal sequence occupies residues 1 to 28 (MKAMKQRIAKFSPVASFRNLCIAGSVTA). The Periplasmic segment spans residues 29-57 (ATSLPAFAGVIDTSAVESAITDGQGDMKA). A helical membrane pass occupies residues 58–78 (IGGYIVGALVILAVAGLIYSM). Over 79–82 (LRKA) the chain is Cytoplasmic.

It belongs to the inovirus capsid protein family. As to quaternary structure, homomultimerizes. There are several thousands of this protein in the phage capsid.

Its subcellular location is the virion. The protein localises to the host membrane. Functionally, self assembles to form a helical capsid wrapping up the viral genomic DNA. The capsid displays a filamentous structure with a length of 760-1950 nm and a width of 6-8 nm. The virion assembly and budding take place at the host inner membrane. This is Capsid protein G8P (VIII) from Pseudomonas phage Pf1 (Bacteriophage Pf1).